Reading from the N-terminus, the 215-residue chain is Urease accessory protein UreG (215 aa).

The tract at residues 1-21 (MNAPASSPARRTKKLPPLRVG) is disordered. 24 to 31 (GPVGSGKT) contributes to the GTP binding site.

This sequence belongs to the SIMIBI class G3E GTPase family. UreG subfamily. Homodimer. UreD, UreF and UreG form a complex that acts as a GTP-hydrolysis-dependent molecular chaperone, activating the urease apoprotein by helping to assemble the nickel containing metallocenter of UreC. The UreE protein probably delivers the nickel.

The protein resides in the cytoplasm. Functionally, facilitates the functional incorporation of the urease nickel metallocenter. This process requires GTP hydrolysis, probably effectuated by UreG. This Burkholderia vietnamiensis (strain G4 / LMG 22486) (Burkholderia cepacia (strain R1808)) protein is Urease accessory protein UreG.